We begin with the raw amino-acid sequence, 206 residues long: N-(5'-phosphoribosyl)anthranilate isomerase (206 aa).

This sequence belongs to the TrpF family.

The catalysed reaction is N-(5-phospho-beta-D-ribosyl)anthranilate = 1-(2-carboxyphenylamino)-1-deoxy-D-ribulose 5-phosphate. Its pathway is amino-acid biosynthesis; L-tryptophan biosynthesis; L-tryptophan from chorismate: step 3/5. This Pseudomonas putida (strain ATCC 700007 / DSM 6899 / JCM 31910 / BCRC 17059 / LMG 24140 / F1) protein is N-(5'-phosphoribosyl)anthranilate isomerase.